Reading from the N-terminus, the 91-residue chain is Putative pterin-4-alpha-carbinolamine dehydratase (91 aa).

Belongs to the pterin-4-alpha-carbinolamine dehydratase family.

The enzyme catalyses (4aS,6R)-4a-hydroxy-L-erythro-5,6,7,8-tetrahydrobiopterin = (6R)-L-erythro-6,7-dihydrobiopterin + H2O. The chain is Putative pterin-4-alpha-carbinolamine dehydratase from Sulfolobus acidocaldarius (strain ATCC 33909 / DSM 639 / JCM 8929 / NBRC 15157 / NCIMB 11770).